The sequence spans 176 residues: Peptide deformylase 2 (176 aa).

Positions 99 and 141 each coordinate Fe cation. Residue Glu142 is part of the active site. Fe cation is bound at residue His145.

This sequence belongs to the polypeptide deformylase family. Fe(2+) serves as cofactor.

It catalyses the reaction N-terminal N-formyl-L-methionyl-[peptide] + H2O = N-terminal L-methionyl-[peptide] + formate. Functionally, removes the formyl group from the N-terminal Met of newly synthesized proteins. Requires at least a dipeptide for an efficient rate of reaction. N-terminal L-methionine is a prerequisite for activity but the enzyme has broad specificity at other positions. This chain is Peptide deformylase 2, found in Bordetella bronchiseptica (strain ATCC BAA-588 / NCTC 13252 / RB50) (Alcaligenes bronchisepticus).